Consider the following 359-residue polypeptide: Peptide chain release factor 1 (359 aa).

Glutamine 236 bears the N5-methylglutamine mark.

The protein belongs to the prokaryotic/mitochondrial release factor family. In terms of processing, methylated by PrmC. Methylation increases the termination efficiency of RF1.

The protein localises to the cytoplasm. Peptide chain release factor 1 directs the termination of translation in response to the peptide chain termination codons UAG and UAA. The protein is Peptide chain release factor 1 of Streptococcus agalactiae serotype V (strain ATCC BAA-611 / 2603 V/R).